Here is an 88-residue protein sequence, read N- to C-terminus: Small ribosomal subunit protein uS15 (88 aa).

This sequence belongs to the universal ribosomal protein uS15 family. In terms of assembly, part of the 30S ribosomal subunit. Forms a bridge to the 50S subunit in the 70S ribosome, contacting the 23S rRNA.

One of the primary rRNA binding proteins, it binds directly to 16S rRNA where it helps nucleate assembly of the platform of the 30S subunit by binding and bridging several RNA helices of the 16S rRNA. Functionally, forms an intersubunit bridge (bridge B4) with the 23S rRNA of the 50S subunit in the ribosome. In Syntrophus aciditrophicus (strain SB), this protein is Small ribosomal subunit protein uS15.